The following is a 186-amino-acid chain: Probable chorismate pyruvate-lyase (186 aa).

3 residues coordinate substrate: Arg80, Leu118, and Glu170.

It belongs to the UbiC family.

It localises to the cytoplasm. It catalyses the reaction chorismate = 4-hydroxybenzoate + pyruvate. Its pathway is cofactor biosynthesis; ubiquinone biosynthesis. Functionally, removes the pyruvyl group from chorismate, with concomitant aromatization of the ring, to provide 4-hydroxybenzoate (4HB) for the ubiquinone pathway. This is Probable chorismate pyruvate-lyase from Pseudomonas syringae pv. tomato (strain ATCC BAA-871 / DC3000).